The primary structure comprises 313 residues: Serine/threonine-protein phosphatase PP2A-3 catalytic subunit (313 aa).

The Mn(2+) site is built by Asp-61, His-63, Asp-89, and Asn-121. His-122 (proton donor) is an active-site residue. The Mn(2+) site is built by His-171 and His-245. Leucine methyl ester is present on Leu-313.

This sequence belongs to the PPP phosphatase family. PP-2A subfamily. PP2A consists of a common heterodimeric core enzyme, composed of a 36 kDa catalytic subunit (subunit C) and a 65 kDa constant regulatory subunit (subunit A), that associates with a variety of regulatory subunits such as subunits B (the R2/B/PR55/B55, R3/B''/PR72/PR130/PR59 and R5/B'/B56 families). Interacts with ACR4. Interacts with TAP46. Interacts with SIC/RON3. It depends on Mn(2+) as a cofactor. Reversibly methyl esterified on Leu-313 by leucine carboxyl methyltransferase 1 (LCMT1) and pectin methylesterase 1 (PME1). Carboxyl methylation influences the affinity of the catalytic subunit for the different regulatory subunits, thereby modulating the PP2A holoenzyme's substrate specificity, enzyme activity and cellular localization. Post-translationally, phosphorylation of either threonine (by autophosphorylation-activated protein kinase) or tyrosine results in inactivation of the phosphatase. Auto-dephosphorylation has been suggested as a mechanism for reactivation.

The protein resides in the cytoplasm. The enzyme catalyses O-phospho-L-seryl-[protein] + H2O = L-seryl-[protein] + phosphate. The catalysed reaction is O-phospho-L-threonyl-[protein] + H2O = L-threonyl-[protein] + phosphate. Its function is as follows. Functions redundantly with PP2A4, and is involved in establishing auxin gradients, apical-basal axis of polarity and root and shoot apical meristem during embryogenesis. May dephosphorylate PIN1 and regulate its subcellular distribution for polar auxin transport. Involved in the regulation of formative cell division in roots by dephosphorylating ACR4 protein kinase. The protein is Serine/threonine-protein phosphatase PP2A-3 catalytic subunit of Arabidopsis thaliana (Mouse-ear cress).